The chain runs to 492 residues: Ketol-acid reductoisomerase (NADP(+)) (492 aa).

One can recognise a KARI N-terminal Rossmann domain in the interval 15–208 (AQLGKCRFMA…GGHRAGVLES (194 aa)). NADP(+)-binding positions include 45 to 48 (CGAQ), Arg-68, Arg-76, Ser-78, and 108 to 110 (DKQ). The active site involves His-132. Gly-158 serves as a coordination point for NADP(+). KARI C-terminal knotted domains lie at 209–344 (SFVA…NAPQ) and 345–485 (FEGK…MTDM). Mg(2+) contacts are provided by Asp-217, Glu-221, Glu-389, and Glu-393. Substrate is bound at residue Ser-414.

It belongs to the ketol-acid reductoisomerase family. Mg(2+) serves as cofactor.

The catalysed reaction is (2R)-2,3-dihydroxy-3-methylbutanoate + NADP(+) = (2S)-2-acetolactate + NADPH + H(+). The enzyme catalyses (2R,3R)-2,3-dihydroxy-3-methylpentanoate + NADP(+) = (S)-2-ethyl-2-hydroxy-3-oxobutanoate + NADPH + H(+). Its pathway is amino-acid biosynthesis; L-isoleucine biosynthesis; L-isoleucine from 2-oxobutanoate: step 2/4. It functions in the pathway amino-acid biosynthesis; L-valine biosynthesis; L-valine from pyruvate: step 2/4. In terms of biological role, involved in the biosynthesis of branched-chain amino acids (BCAA). Catalyzes an alkyl-migration followed by a ketol-acid reduction of (S)-2-acetolactate (S2AL) to yield (R)-2,3-dihydroxy-isovalerate. In the isomerase reaction, S2AL is rearranged via a Mg-dependent methyl migration to produce 3-hydroxy-3-methyl-2-ketobutyrate (HMKB). In the reductase reaction, this 2-ketoacid undergoes a metal-dependent reduction by NADPH to yield (R)-2,3-dihydroxy-isovalerate. This chain is Ketol-acid reductoisomerase (NADP(+)), found in Yersinia enterocolitica serotype O:8 / biotype 1B (strain NCTC 13174 / 8081).